Consider the following 542-residue polypeptide: Glucose-6-phosphate isomerase 2 (542 aa).

E353 functions as the Proton donor in the catalytic mechanism. Active-site residues include H384 and K505.

The protein belongs to the GPI family.

It is found in the cytoplasm. The enzyme catalyses alpha-D-glucose 6-phosphate = beta-D-fructose 6-phosphate. The protein operates within carbohydrate biosynthesis; gluconeogenesis. It functions in the pathway carbohydrate degradation; glycolysis; D-glyceraldehyde 3-phosphate and glycerone phosphate from D-glucose: step 2/4. Its function is as follows. Catalyzes the reversible isomerization of glucose-6-phosphate to fructose-6-phosphate. This Cupriavidus pinatubonensis (strain JMP 134 / LMG 1197) (Cupriavidus necator (strain JMP 134)) protein is Glucose-6-phosphate isomerase 2.